The primary structure comprises 282 residues: Stress response regulator protein 1 (282 aa).

Composition is skewed to low complexity over residues 12-30 and 45-58; these read NLSR…HSST and NSQS…SNNN. Disordered stretches follow at residues 12–31, 43–84, and 112–139; these read NLSR…SSTV, DINS…DDED, and LTPF…TTVV. Residues 66-77 are compositionally biased toward polar residues; the sequence is SDYNSYTHNQYY. Positions 125 to 139 are enriched in low complexity; sequence SIISSKSSNKSTTVV. Positions 155-273 constitute a Response regulatory domain; that stretch reads SFLIVDDNII…LDFMANSIDD (119 aa). Residue D206 is modified to 4-aspartylphosphate.

Required for stress adaptation, morphogenesis and virulence. The chain is Stress response regulator protein 1 (SRR1) from Candida albicans (strain SC5314 / ATCC MYA-2876) (Yeast).